The sequence spans 465 residues: Chromosomal replication initiator protein DnaA (465 aa).

A domain I, interacts with DnaA modulators region spans residues 1–72 (MRTKQLWQVA…ETLSLLLGRP (72 aa)). Residues 72-117 (PIAVHFTVHGQDDEEHPVQRRPQRRALASEEGSASKQLSLTPSPEH) are domain II. Residues 80–118 (HGQDDEEHPVQRRPQRRALASEEGSASKQLSLTPSPEHG) form a disordered region. Residues 103–113 (GSASKQLSLTP) are compositionally biased toward polar residues. Residues 118–334 (GLNPRYTFEK…GALNRIVALA (217 aa)) form a domain III, AAA+ region region. The ATP site is built by Gly162, Gly164, Lys165, and Thr166. A domain IV, binds dsDNA region spans residues 335–465 (QLTHQPITLA…DAKAPLASRH (131 aa)).

Belongs to the DnaA family. In terms of assembly, oligomerizes as a right-handed, spiral filament on DNA at oriC.

The protein resides in the cytoplasm. Functionally, plays an essential role in the initiation and regulation of chromosomal replication. ATP-DnaA binds to the origin of replication (oriC) to initiate formation of the DNA replication initiation complex once per cell cycle. Binds the DnaA box (a 9 base pair repeat at the origin) and separates the double-stranded (ds)DNA. Forms a right-handed helical filament on oriC DNA; dsDNA binds to the exterior of the filament while single-stranded (ss)DNA is stabiized in the filament's interior. The ATP-DnaA-oriC complex binds and stabilizes one strand of the AT-rich DNA unwinding element (DUE), permitting loading of DNA polymerase. After initiation quickly degrades to an ADP-DnaA complex that is not apt for DNA replication. Binds acidic phospholipids. In Thermomicrobium roseum (strain ATCC 27502 / DSM 5159 / P-2), this protein is Chromosomal replication initiator protein DnaA.